Consider the following 290-residue polypeptide: GTPase Era (290 aa).

The Era-type G domain maps to 2–167 (KSGFVSIVGR…LDELVKYLPE (166 aa)). A G1 region spans residues 10-17 (GRTNAGKS). 10–17 (GRTNAGKS) contributes to the GTP binding site. Residues 36 to 40 (NATRR) are G2. Residues 57 to 60 (DTPG) are G3. Residues 57–61 (DTPGL) and 116–119 (NKVD) each bind GTP. The interval 116 to 119 (NKVD) is G4. The interval 146 to 148 (YSI) is G5. The region spanning 194-274 (IYENLSDEIP…MLKLFVQLEK (81 aa)) is the KH type-2 domain.

The protein belongs to the TRAFAC class TrmE-Era-EngA-EngB-Septin-like GTPase superfamily. Era GTPase family. As to quaternary structure, monomer.

The protein localises to the cytoplasm. It localises to the cell inner membrane. In terms of biological role, an essential GTPase that binds both GDP and GTP, with rapid nucleotide exchange. Plays a role in 16S rRNA processing and 30S ribosomal subunit biogenesis and possibly also in cell cycle regulation and energy metabolism. The chain is GTPase Era from Campylobacter lari (strain RM2100 / D67 / ATCC BAA-1060).